The following is a 466-amino-acid chain: Amidase (466 aa).

Active-site charge relay system residues include Lys-79 and Ser-148. The disordered stretch occupies residues 128–152 (YGRITPKSRNPRDPGRTPGGSSGGS). The active-site Acyl-ester intermediate is the Ser-172.

This sequence belongs to the amidase family.

It carries out the reaction a monocarboxylic acid amide + H2O = a monocarboxylate + NH4(+). This is Amidase from Pseudomonas putida (Arthrobacter siderocapsulatus).